A 296-amino-acid chain; its full sequence is Acetylglutamate kinase (296 aa).

Substrate is bound by residues 68–69, R90, and N193; that span reads GG.

This sequence belongs to the acetylglutamate kinase family. ArgB subfamily.

It localises to the cytoplasm. It catalyses the reaction N-acetyl-L-glutamate + ATP = N-acetyl-L-glutamyl 5-phosphate + ADP. It participates in amino-acid biosynthesis; L-arginine biosynthesis; N(2)-acetyl-L-ornithine from L-glutamate: step 2/4. Catalyzes the ATP-dependent phosphorylation of N-acetyl-L-glutamate. The polypeptide is Acetylglutamate kinase (Acidothermus cellulolyticus (strain ATCC 43068 / DSM 8971 / 11B)).